The chain runs to 219 residues: Large ribosomal subunit protein bL31m (219 aa).

Basic and acidic residues-rich tracts occupy residues 169 to 181 and 210 to 219; these read KKEEEEAAKKAAE and KETRHYGKKK. Disordered regions lie at residues 169-188 and 200-219; these read KKEEEEAAKKAAEAEEADPF and TENMNPGLNFKETRHYGKKK.

Belongs to the bacterial ribosomal protein bL31 family. Highly divergent. Component of the mitochondrial large ribosomal subunit (mt-LSU). Mature N.crassa 74S mitochondrial ribosomes consist of a small (37S) and a large (54S) subunit. The 37S small subunit contains a 16S ribosomal RNA (16S mt-rRNA) and 32 different proteins. The 54S large subunit contains a 23S rRNA (23S mt-rRNA) and 42 different proteins. bL31m bridges the mt-LSU central protuberance and the mt-SSU head.

The protein localises to the mitochondrion. Its function is as follows. Component of the mitochondrial ribosome (mitoribosome), a dedicated translation machinery responsible for the synthesis of mitochondrial genome-encoded proteins, including at least some of the essential transmembrane subunits of the mitochondrial respiratory chain. The mitoribosomes are attached to the mitochondrial inner membrane and translation products are cotranslationally integrated into the membrane. The protein is Large ribosomal subunit protein bL31m (mrpl36) of Neurospora crassa (strain ATCC 24698 / 74-OR23-1A / CBS 708.71 / DSM 1257 / FGSC 987).